A 39-amino-acid chain; its full sequence is Beta-theraphotoxin-Cm2a (39 aa).

3 cysteine pairs are disulfide-bonded: cysteine 7-cysteine 21, cysteine 14-cysteine 26, and cysteine 20-cysteine 33. At phenylalanine 39 the chain carries Phenylalanine amide.

Expressed by the venom gland.

It is found in the secreted. In terms of biological role, inhibits mammalian voltage-gated sodium channel subtypes Nav1.5/SCN5A and Nav1.8/SCN10A by shifting the voltage dependence of channel activation to more depolarized potentials and by blocking the inward component of the sodium current. In vivo, this toxin causes erect, elevated tail, initial partial ataxia, followed by recovery over approximately 1 hour after injection and the progressive development of shaking. Although paralysis subsides, the body tremors never cease and persist until the end of the experiment. The sequence is that of Beta-theraphotoxin-Cm2a from Ceratogyrus marshalli (Straighthorned baboon tarantula).